The following is a 109-amino-acid chain: Protein ripply2 (109 aa).

Polar residues predominate over residues Met-1–Asp-15. 2 disordered regions span residues Met-1–Asp-42 and Tyr-88–Arg-109. Residues Trp-20 to Trp-23 carry the WRPW motif motif. Over residues Lys-30–Asp-42 the composition is skewed to basic and acidic residues. The interval His-53–Tyr-88 is ripply homology domain. Acidic residues predominate over residues Glu-89–Arg-109.

The protein belongs to the ripply family. As to expression, first expressed in the paraxial mesoderm at the 90% epiboly stage, and subsequently confined to the presomitic mesoderm. Expressed in the rostral compartment of S-I and S-II.

It localises to the nucleus. In terms of biological role, plays a role in somitogenesis. Required for somite segregation and establishment of rostrocaudal polarity in somites. This Danio rerio (Zebrafish) protein is Protein ripply2.